Reading from the N-terminus, the 182-residue chain is Alkyl hydroperoxide reductase AhpD (182 aa).

Cys132 serves as the catalytic Proton donor. Cys132 and Cys135 are oxidised to a cystine. Cys135 acts as the Cysteine sulfenic acid (-SOH) intermediate in catalysis.

The protein belongs to the AhpD family.

It carries out the reaction N(6)-[(R)-dihydrolipoyl]-L-lysyl-[lipoyl-carrier protein] + a hydroperoxide = N(6)-[(R)-lipoyl]-L-lysyl-[lipoyl-carrier protein] + an alcohol + H2O. Antioxidant protein with alkyl hydroperoxidase activity. Required for the reduction of the AhpC active site cysteine residues and for the regeneration of the AhpC enzyme activity. This Bradyrhizobium diazoefficiens (strain JCM 10833 / BCRC 13528 / IAM 13628 / NBRC 14792 / USDA 110) protein is Alkyl hydroperoxide reductase AhpD.